Here is a 310-residue protein sequence, read N- to C-terminus: Formyltetrahydrofolate deformylase (310 aa).

The tract at residues 1–30 (MGKGSMTAHATPNEPDYPPPPGGPPPPADI) is disordered. The span at 15–28 (PDYPPPPGGPPPPA) shows a compositional bias: pro residues. The ACT domain occupies 32-108 (RLLLRCHDRP…VADKFGIDYR (77 aa)). The active site involves D255.

The protein belongs to the PurU family.

It carries out the reaction (6R)-10-formyltetrahydrofolate + H2O = (6S)-5,6,7,8-tetrahydrofolate + formate + H(+). It functions in the pathway purine metabolism; IMP biosynthesis via de novo pathway; formate from 10-formyl-5,6,7,8-tetrahydrofolate: step 1/1. Its function is as follows. Catalyzes the hydrolysis of 10-formyltetrahydrofolate (formyl-FH4) to formate and tetrahydrofolate (FH4). The chain is Formyltetrahydrofolate deformylase from Mycobacterium bovis (strain ATCC BAA-935 / AF2122/97).